Consider the following 216-residue polypeptide: Redox-sensing transcriptional repressor Rex (216 aa).

Residues 17–56 (IYFRYLTFLHDAGTDRISSAELSDAIKFDAATIRRDFSYF) constitute a DNA-binding region (H-T-H motif). 91-96 (GAGNLG) provides a ligand contact to NAD(+).

The protein belongs to the transcriptional regulatory Rex family. Homodimer.

It is found in the cytoplasm. In terms of biological role, modulates transcription in response to changes in cellular NADH/NAD(+) redox state. This is Redox-sensing transcriptional repressor Rex from Leuconostoc citreum (strain KM20).